We begin with the raw amino-acid sequence, 190 residues long: Small ribosomal subunit protein mS23 (190 aa).

Alanine 2 carries the post-translational modification N-acetylalanine. N6-succinyllysine is present on lysine 83. N6-acetyllysine is present on lysine 102. The interval 137-190 (KARTQQEGSQVSRKSESMGVESQTALEENPPLKEVPQAQHLESPGEESKGLSPP) is disordered.

The protein belongs to the mitochondrion-specific ribosomal protein mS23 family. Component of the mitochondrial ribosome small subunit (28S) which comprises a 12S rRNA and about 30 distinct proteins.

The protein resides in the mitochondrion. This Bos taurus (Bovine) protein is Small ribosomal subunit protein mS23.